Here is a 184-residue protein sequence, read N- to C-terminus: Elongation factor P 1 (184 aa).

Belongs to the elongation factor P family.

The protein resides in the cytoplasm. It participates in protein biosynthesis; polypeptide chain elongation. Involved in peptide bond synthesis. Stimulates efficient translation and peptide-bond synthesis on native or reconstituted 70S ribosomes in vitro. Probably functions indirectly by altering the affinity of the ribosome for aminoacyl-tRNA, thus increasing their reactivity as acceptors for peptidyl transferase. The chain is Elongation factor P 1 (efp1) from Protochlamydia amoebophila (strain UWE25).